The chain runs to 149 residues: Ribosomal RNA large subunit methyltransferase H (149 aa).

Residues Leu71, Gly98, and 117–122 each bind S-adenosyl-L-methionine; that span reads LSKLTL.

This sequence belongs to the RNA methyltransferase RlmH family. As to quaternary structure, homodimer.

Its subcellular location is the cytoplasm. It catalyses the reaction pseudouridine(1915) in 23S rRNA + S-adenosyl-L-methionine = N(3)-methylpseudouridine(1915) in 23S rRNA + S-adenosyl-L-homocysteine + H(+). Its function is as follows. Specifically methylates the pseudouridine at position 1915 (m3Psi1915) in 23S rRNA. This chain is Ribosomal RNA large subunit methyltransferase H, found in Campylobacter jejuni subsp. jejuni serotype O:6 (strain 81116 / NCTC 11828).